Reading from the N-terminus, the 136-residue chain is Large ribosomal subunit protein bL19 (136 aa).

Belongs to the bacterial ribosomal protein bL19 family.

Functionally, this protein is located at the 30S-50S ribosomal subunit interface and may play a role in the structure and function of the aminoacyl-tRNA binding site. The chain is Large ribosomal subunit protein bL19 from Xylella fastidiosa (strain M23).